The primary structure comprises 146 residues: MRNEMNLQFSALSQNESFARVTVAAFIAQLDPTMEELTEIKTVVSEAVTNAIIHGYEGNAEGIVYISVILEEAMVKLTIRDEGIGIFNLDEARQPLFTTKPELERSGMGFTIMENFMDEVEVISNESFGTTIHLTKYLSNSNALCN.

This sequence belongs to the anti-sigma-factor family.

It carries out the reaction L-seryl-[protein] + ATP = O-phospho-L-seryl-[protein] + ADP + H(+). It catalyses the reaction L-threonyl-[protein] + ATP = O-phospho-L-threonyl-[protein] + ADP + H(+). Functionally, binds to sigma F and blocks its ability to form an RNA polymerase holoenzyme (E-sigma F). Phosphorylates SpoIIAA on a serine residue. This phosphorylation may enable SpoIIAA to act as an anti-anti-sigma factor that counteracts SpoIIAB and thus releases sigma F from inhibition. This Bacillus cereus (strain G9842) protein is Anti-sigma F factor.